The primary structure comprises 84 residues: Sulfur carrier protein TusA (84 aa).

Cysteine 19 functions as the Cysteine persulfide intermediate in the catalytic mechanism.

This sequence belongs to the sulfur carrier protein TusA family. Interacts with IscS.

It is found in the cytoplasm. It functions in the pathway tRNA modification. Its function is as follows. Sulfur carrier protein involved in sulfur trafficking in the cell. Part of a sulfur-relay system required for 2-thiolation during synthesis of 2-thiouridine of the modified wobble base 5-methylaminomethyl-2-thiouridine (mnm(5)s(2)U) in tRNA. Interacts with IscS and stimulates its cysteine desulfurase activity. Accepts an activated sulfur from IscS, which is then transferred to TusD, and thus determines the direction of sulfur flow from IscS to 2-thiouridine formation. Also appears to be involved in sulfur transfer for the biosynthesis of molybdopterin. The sequence is that of Sulfur carrier protein TusA from Photorhabdus laumondii subsp. laumondii (strain DSM 15139 / CIP 105565 / TT01) (Photorhabdus luminescens subsp. laumondii).